A 75-amino-acid polypeptide reads, in one-letter code: U6-lycotoxin-Ls1f (75 aa).

Residues 1–21 (MKLLLFTALVLVVISLVEVEA) form the signal peptide. The propeptide occupies 22 to 25 (ENER).

Belongs to the neurotoxin 19 (CSTX) family. 06 (U6-Lctx) subfamily. In terms of processing, contains 4 disulfide bonds. Expressed by the venom gland.

Its subcellular location is the secreted. This is U6-lycotoxin-Ls1f from Lycosa singoriensis (Wolf spider).